We begin with the raw amino-acid sequence, 398 residues long: Protein RecA (398 aa).

ATP is bound at residue 83–90 (GPESSGKT). Residues 351–398 (AGQKNDKKSKLEEKANAGAGISEASEPDSSAEEDFEEFAPIDIGSLGE) form a disordered region. Basic and acidic residues predominate over residues 354–365 (KNDKKSKLEEKA). Over residues 375 to 389 (SEPDSSAEEDFEEFA) the composition is skewed to acidic residues.

Belongs to the RecA family.

Its subcellular location is the cytoplasm. Its function is as follows. Can catalyze the hydrolysis of ATP in the presence of single-stranded DNA, the ATP-dependent uptake of single-stranded DNA by duplex DNA, and the ATP-dependent hybridization of homologous single-stranded DNAs. It interacts with LexA causing its activation and leading to its autocatalytic cleavage. The sequence is that of Protein RecA from Ruminococcus albus (strain ATCC 27210 / DSM 20455 / JCM 14654 / NCDO 2250 / 7).